Here is an 81-residue protein sequence, read N- to C-terminus: Centromere protein X (81 aa).

N-acetylmethionine is present on Met1.

This sequence belongs to the CENP-X/MHF2 family. As to quaternary structure, heterodimer with CENPX, sometimes called MHF; this interaction stabilizes both partners. MHF heterodimers can assemble to form tetrameric structures. MHF also coassemble with CENPT-CENPW heterodimers at centromeres to form the tetrameric CENP-T-W-S-X complex. Forms a discrete complex with FANCM and CENPX, called FANCM-MHF; this interaction, probably mediated by direct binding between CENPS and FANCM, leads to synergistic activation of double-stranded DNA binding and strongly stimulates FANCM-mediated DNA remodeling. Recruited by FANCM to the Fanconi anemia (FA) core complex, which consists of CENPS, CENPX, FANCA, FANCB, FANCC, FANCE, FANCF, FANCG, FANCL, FANCM, FAAP24 and FAAP100. The FA core complex associates with Bloom syndrome (BLM) complex, which consists of at least BLM, DNA topoisomerase 3-alpha (TOP3A), RMI1/BLAP75, RPA1/RPA70 and RPA2/RPA32. The super complex between FA and BLM is called BRAFT.

The protein localises to the nucleus. It is found in the chromosome. Its subcellular location is the centromere. It localises to the kinetochore. Functionally, DNA-binding component of the Fanconi anemia (FA) core complex. Required for the normal activation of the FA pathway, leading to monoubiquitination of the FANCI-FANCD2 complex in response to DNA damage, cellular resistance to DNA cross-linking drugs, and prevention of chromosomal breakage. In complex with CENPS (MHF heterodimer), crucial cofactor for FANCM in both binding and ATP-dependent remodeling of DNA. Stabilizes FANCM. In complex with CENPS and FANCM (but not other FANC proteins), rapidly recruited to blocked forks and promotes gene conversion at blocked replication forks. In complex with CENPS, CENPT and CENPW (CENP-T-W-S-X heterotetramer), involved in the formation of a functional kinetochore outer plate, which is essential for kinetochore-microtubule attachment and faithful mitotic progression. As a component of MHF and CENP-T-W-S-X complexes, binds DNA and bends it to form a nucleosome-like structure. DNA-binding function is fulfilled in the presence of CENPS, with the following preference for DNA substates: Holliday junction &gt; double-stranded &gt; splay arm &gt; single-stranded. Does not bind DNA on its own. The polypeptide is Centromere protein X (CENPX) (Pongo abelii (Sumatran orangutan)).